Here is a 112-residue protein sequence, read N- to C-terminus: MNETILVKIITPLSIAFEKQAKMVTMPGEEGMFGVLPNHAPMIVSLKAGLVQVYIDDIYNPQITYLVSSGVTEVTGSYVNIATETAINVTNLNEAEIATKLLELQKPLSEQH.

This sequence belongs to the ATPase epsilon chain family. As to quaternary structure, F-type ATPases have 2 components, CF(1) - the catalytic core - and CF(0) - the membrane proton channel. CF(1) has five subunits: alpha(3), beta(3), gamma(1), delta(1), epsilon(1). CF(0) has three main subunits: a, b and c.

The protein resides in the cell inner membrane. Functionally, produces ATP from ADP in the presence of a proton gradient across the membrane. The protein is ATP synthase epsilon chain of Rickettsia felis (strain ATCC VR-1525 / URRWXCal2) (Rickettsia azadi).